A 215-amino-acid polypeptide reads, in one-letter code: Ribonuclease T (215 aa).

Residues 20–194 (VVIDVETAGF…YDTERTAVLF (175 aa)) enclose the Exonuclease domain. Mg(2+) contacts are provided by D23, E25, H181, and D186. H181 (proton donor/acceptor) is an active-site residue.

This sequence belongs to the RNase T family. In terms of assembly, homodimer. The cofactor is Mg(2+).

Functionally, trims short 3' overhangs of a variety of RNA species, leaving a one or two nucleotide 3' overhang. Responsible for the end-turnover of tRNA: specifically removes the terminal AMP residue from uncharged tRNA (tRNA-C-C-A). Also appears to be involved in tRNA biosynthesis. The sequence is that of Ribonuclease T from Salmonella paratyphi A (strain ATCC 9150 / SARB42).